We begin with the raw amino-acid sequence, 132 residues long: Transmembrane protein C1orf162 homolog (132 aa).

A helical transmembrane segment spans residues 36–56; that stretch reads IILAFFAGVLLTLLIVALIFL. Residues 95–132 are disordered; that stretch reads TFKPPEENSNDLTRNHSSGLEPTIYSQIKVTDSDLPLP. Residues 104-124 are compositionally biased toward polar residues; the sequence is NDLTRNHSSGLEPTIYSQIKV. At Ser-111 the chain carries Phosphoserine.

The protein localises to the membrane. The chain is Transmembrane protein C1orf162 homolog from Mus musculus (Mouse).